Consider the following 76-residue polypeptide: Small ribosomal subunit protein uS17 (76 aa).

This sequence belongs to the universal ribosomal protein uS17 family. As to quaternary structure, part of the 30S ribosomal subunit.

One of the primary rRNA binding proteins, it binds specifically to the 5'-end of 16S ribosomal RNA. The sequence is that of Small ribosomal subunit protein uS17 from Ruegeria sp. (strain TM1040) (Silicibacter sp.).